The following is a 245-amino-acid chain: Tetraspanin-6 (245 aa).

The Cytoplasmic portion of the chain corresponds to 1-19 (MASPSRRLQTKPVITCFKS). A helical membrane pass occupies residues 20 to 40 (VLLIYTFIFWITGVILLAVGI). Residues 41 to 59 (WGKVSLENYFSLLNEKATN) are Extracellular-facing. A helical membrane pass occupies residues 60–80 (VPFVLIATGTVIILLGTFGCF). At 81–93 (ATCRASAWMLKLY) the chain is on the cytoplasmic side. Residues 94–114 (AMFLTLIFLVELVAAIVGFVF) form a helical membrane-spanning segment. The Extracellular segment spans residues 115–208 (RHEIKNSFKN…IKVMTIIESE (94 aa)). N-linked (GlcNAc...) asparagine glycosylation occurs at Asn134. The helical transmembrane segment at 209 to 229 (MGVVAGISFGVACFQLIGIFL) threads the bilayer. Residues 230–245 (AYCLSRAITNNQYEIV) are Cytoplasmic-facing.

It belongs to the tetraspanin (TM4SF) family.

Its subcellular location is the membrane. This is Tetraspanin-6 (TSPAN6) from Pongo abelii (Sumatran orangutan).